We begin with the raw amino-acid sequence, 431 residues long: Serine hydroxymethyltransferase (431 aa).

Position 122–124 (122–124 (GHI)) interacts with (6S)-5,6,7,8-tetrahydrofolate. K228 is subject to N6-(pyridoxal phosphate)lysine. E245 lines the (6S)-5,6,7,8-tetrahydrofolate pocket.

Belongs to the SHMT family. Homodimer. Pyridoxal 5'-phosphate serves as cofactor.

It is found in the cytoplasm. It functions in the pathway amino-acid biosynthesis; glycine biosynthesis; glycine from L-serine: step 1/1. Functionally, catalyzes the reversible interconversion of serine and glycine with a modified folate serving as the one-carbon carrier. Also exhibits a pteridine-independent aldolase activity toward beta-hydroxyamino acids, producing glycine and aldehydes, via a retro-aldol mechanism. The sequence is that of Serine hydroxymethyltransferase from Thermococcus kodakarensis (strain ATCC BAA-918 / JCM 12380 / KOD1) (Pyrococcus kodakaraensis (strain KOD1)).